Reading from the N-terminus, the 1382-residue chain is Hepatocyte growth factor receptor (1382 aa).

Residues 1–24 (MKAPAVLAPGVLVLLFTLVRKSHG) form the signal peptide. At 25–935 (ECEEALAKSK…VQPDQNFTGL (911 aa)) the chain is on the extracellular side. Residues 27–516 (EEALAKSKMN…TGKKITKIPL (490 aa)) enclose the Sema domain. Residue Asn45 is glycosylated (N-linked (GlcNAc...) asparagine). Disulfide bonds link Cys95-Cys101, Cys98-Cys160, Cys133-Cys141, and Cys173-Cys176. A glycan (N-linked (GlcNAc...) asparagine) is linked at Asn106. N-linked (GlcNAc...) asparagine glycans are attached at residues Asn203 and Asn359. 2 disulfides stabilise this stretch: Cys299–Cys364 and Cys386–Cys398. Residues Asn400, Asn406, and Asn450 are each glycosylated (N-linked (GlcNAc...) asparagine). Cystine bridges form between Cys521–Cys539, Cys527–Cys562, Cys530–Cys546, and Cys542–Cys552. 3 IPT/TIG domains span residues 564-656 (PTIY…FSYV), 658-740 (PVIT…FSYQ), and 743-837 (PTVY…LIYV). Residue Thr583 is glycosylated (O-linked (Man) threonine). 2 N-linked (GlcNAc...) asparagine glycosylation sites follow: Asn608 and Asn636. O-linked (Man) threonine glycosylation occurs at Thr677. Asn751 carries an N-linked (GlcNAc...) asparagine glycan. Residue Thr762 is glycosylated (O-linked (Man) threonine). Asn786, Asn880, and Asn931 each carry an N-linked (GlcNAc...) asparagine glycan. The helical transmembrane segment at 936–956 (IVGVVSISIILLLLLGLFLWL) threads the bilayer. Residues 957–1382 (KKRKQIKDLG…QDSVDDEVDT (426 aa)) are Cytoplasmic-facing. Phosphoserine is present on Ser967. Thr978 carries the phosphothreonine modification. Phosphoserine occurs at positions 991, 998, and 1001. Phosphotyrosine is present on Tyr1004. In terms of domain architecture, Protein kinase spans 1079 to 1346 (VHFNEVIGRG…RISAIFSTFI (268 aa)). ATP contacts are provided by residues 1085 to 1093 (IGRGHFGCV) and Lys1111. Asp1205 acts as the Proton acceptor in catalysis. The interval 1213 to 1382 (LDEKFTVKVA…QDSVDDEVDT (170 aa)) is interaction with RANBP9. Tyr1231 bears the Phosphotyrosine mark. Tyr1235 and Tyr1236 each carry phosphotyrosine; by autocatalysis. Thr1290 carries the post-translational modification Phosphothreonine. The segment at 1321–1360 (WHPKAEMRPSFSELVSRISAIFSTFIGEHYVHVNTTYVNV) is interaction with MUC20. A phosphotyrosine; by autocatalysis mark is found at Tyr1350 and Tyr1357. A Phosphotyrosine modification is found at Tyr1366.

Belongs to the protein kinase superfamily. Tyr protein kinase family. In terms of assembly, heterodimer made of an alpha chain (50 kDa) and a beta chain (145 kDa) which are disulfide linked. Binds PLXNB1. Interacts when phosphorylated with downstream effectors including STAT3, PIK3R1, SRC, PCLG1, GRB2 and GAB1. Interacts with SPSB1, SPSB2 and SPSB4. Interacts with INPP5D/SHIP1. When phosphorylated at Tyr-1357, interacts with INPPL1/SHIP2. Interacts with RANBP9 and RANBP10, as well as SPSB1, SPSB2, SPSB3 and SPSB4. SPSB1 binding occurs in the presence and in the absence of HGF, however HGF treatment has a positive effect on this interaction. Interacts with MUC20; prevents interaction with GRB2 and suppresses hepatocyte growth factor-induced cell proliferation. Interacts with GRB10. Interacts with PTPN1 and PTPN2. Interacts with HSP90AA1 and HSP90AB1; the interaction suppresses MET kinase activity. Interacts with tensin TNS3. Interacts (when phosphorylated) with tensin TNS4 (via SH2 domain); the interaction increases MET protein stability by inhibiting MET endocytosis and subsequent lysosomal degradation. In terms of processing, autophosphorylated in response to ligand binding on Tyr-1235 and Tyr-1236 in the kinase domain leading to further phosphorylation of Tyr-1350 and Tyr-1357 in the C-terminal multifunctional docking site. Dephosphorylated by PTPRJ at Tyr-1350 and Tyr-1366. Dephosphorylated by PTPN1 and PTPN2. Post-translationally, ubiquitinated. Ubiquitination by CBL regulates the receptor stability and activity through proteasomal degradation. O-mannosylation of IPT/TIG domains by TMEM260 is required for protein maturation. O-mannosylated residues are composed of single mannose glycans that are not elongated or modified.

The protein localises to the membrane. It catalyses the reaction L-tyrosyl-[protein] + ATP = O-phospho-L-tyrosyl-[protein] + ADP + H(+). With respect to regulation, in its inactive state, the C-terminal tail interacts with the catalytic domain and inhibits the kinase activity. Upon ligand binding, the C-terminal tail is displaced and becomes phosphorylated, thus increasing the kinase activity. In terms of biological role, receptor tyrosine kinase that transduces signals from the extracellular matrix into the cytoplasm by binding to hepatocyte growth factor/HGF ligand. Regulates many physiological processes including proliferation, scattering, morphogenesis and survival. Ligand binding at the cell surface induces autophosphorylation of MET on its intracellular domain that provides docking sites for downstream signaling molecules. Following activation by ligand, interacts with the PI3-kinase subunit PIK3R1, PLCG1, SRC, GRB2, STAT3 or the adapter GAB1. Recruitment of these downstream effectors by MET leads to the activation of several signaling cascades including the RAS-ERK, PI3 kinase-AKT, or PLCgamma-PKC. The RAS-ERK activation is associated with the morphogenetic effects while PI3K/AKT coordinates prosurvival effects. During embryonic development, MET signaling plays a role in gastrulation, development and migration of muscles and neuronal precursors, angiogenesis and kidney formation. In adults, participates in wound healing as well as organ regeneration and tissue remodeling. Also promotes differentiation and proliferation of hematopoietic cells. The chain is Hepatocyte growth factor receptor (MET) from Loxodonta africana (African elephant).